Consider the following 143-residue polypeptide: Large ribosomal subunit protein uL11 (143 aa).

Belongs to the universal ribosomal protein uL11 family. In terms of assembly, part of the ribosomal stalk of the 50S ribosomal subunit. Interacts with L10 and the large rRNA to form the base of the stalk. L10 forms an elongated spine to which L12 dimers bind in a sequential fashion forming a multimeric L10(L12)X complex. One or more lysine residues are methylated.

Its function is as follows. Forms part of the ribosomal stalk which helps the ribosome interact with GTP-bound translation factors. The polypeptide is Large ribosomal subunit protein uL11 (Phenylobacterium zucineum (strain HLK1)).